A 360-amino-acid chain; its full sequence is Photosystem II protein D1 (360 aa).

Over 1–28 (MTTTLQRRESANLWERFCNWVTSTDNRL) the chain is Cytoplasmic. A helical transmembrane segment spans residues 29–46 (YVGWFGVIMIPTLLAATI). The Lumenal portion of the chain corresponds to 47 to 117 (CFVIAFIAAP…NGGPYQLIIF (71 aa)). A chlorophyll a-binding site is contributed by H118. A helical transmembrane segment spans residues 118–133 (HFLLGASCYMGRQWEL). Positions 126 and 130 each coordinate pheophytin a. Over 134-141 (SYRLGMRP) the chain is Cytoplasmic. Residues 142 to 156 (WICVAYSAPLASAFA) traverse the membrane as a helical segment. Y147 provides a ligand contact to pheophytin a. Residues 157 to 196 (VFLIYPIGQGSFSDGMPLGISGTFNFMIVFQAEHNILMHP) lie on the Lumenal side of the membrane. D170 and E189 together coordinate [CaMn4O5] cluster. Residues 197–218 (FHQLGVAGVFGGALFCAMHGSL) traverse the membrane as a helical segment. H198 contacts chlorophyll a. M214 lines the pheophytin a pocket. Residues H215 and 264 to 265 (SF) each bind a quinone. H215 provides a ligand contact to Fe cation. At 219-273 (VTSSLIRETTETESANYGYKFGQEEETYNIVAAHGYFGRLIFQYASFNNSRSLHF) the chain is on the cytoplasmic side. Fe cation is bound at residue H272. Residues 274 to 288 (FLAAWRVVGVWFAAL) form a helical membrane-spanning segment. The Lumenal portion of the chain corresponds to 289–360 (GISTMAFNLN…VAMIAPSING (72 aa)). Residues H332, E333, D342, and A344 each contribute to the [CaMn4O5] cluster site. The propeptide occupies 345–360 (SAESAPVAMIAPSING).

It belongs to the reaction center PufL/M/PsbA/D family. As to quaternary structure, PSII is composed of 1 copy each of membrane proteins PsbA, PsbB, PsbC, PsbD, PsbE, PsbF, PsbH, PsbI, PsbJ, PsbK, PsbL, PsbM, PsbT, PsbX, PsbY, PsbZ, Psb30/Ycf12, peripheral proteins PsbO, CyanoQ (PsbQ), PsbU, PsbV and a large number of cofactors. It forms dimeric complexes. The D1/D2 heterodimer binds P680, chlorophylls that are the primary electron donor of PSII, and subsequent electron acceptors. It shares a non-heme iron and each subunit binds pheophytin, quinone, additional chlorophylls, carotenoids and lipids. D1 provides most of the ligands for the Mn4-Ca-O5 cluster of the oxygen-evolving complex (OEC). There is also a Cl(-1) ion associated with D1 and D2, which is required for oxygen evolution. The PSII complex binds additional chlorophylls, carotenoids and specific lipids. is required as a cofactor. Post-translationally, C-terminally processed by CtpA; processing is essential to allow assembly of the oxygen-evolving complex and thus photosynthetic growth. Tyr-161 forms a radical intermediate that is referred to as redox-active TyrZ, YZ or Y-Z.

The protein localises to the cellular thylakoid membrane. It catalyses the reaction 2 a plastoquinone + 4 hnu + 2 H2O = 2 a plastoquinol + O2. In terms of biological role, photosystem II (PSII) is a light-driven water:plastoquinone oxidoreductase that uses light energy to abstract electrons from H(2)O, generating O(2) and a proton gradient subsequently used for ATP formation. It consists of a core antenna complex that captures photons, and an electron transfer chain that converts photonic excitation into a charge separation. The D1/D2 (PsbA/PsbD) reaction center heterodimer binds P680, the primary electron donor of PSII as well as several subsequent electron acceptors. The protein is Photosystem II protein D1 of Thermostichus vulcanus (Synechococcus vulcanus).